The sequence spans 231 residues: CLAVATA3/ESR (CLE)-related protein 4B-1 (231 aa).

An N-terminal signal peptide occupies residues 1-21 (MATNTMLCLLILSVVLALAFA). The tract at residues 21-83 (ATNKKGDEEP…SNLLPNNNWM (63 aa)) is required for secretion from the host cytoplasm to the host apoplasm. Asn32 carries an N-linked (GlcNAc...) asparagine glycan. A disordered region spans residues 116-231 (RKTGMHSQRH…APAGPDPIHH (116 aa)). 2 stretches are compositionally biased toward basic and acidic residues: residues 125–137 (HHEE…EKRV) and 144–221 (PIHH…EKRG). One copy of the A-1 repeat lies at 127–135 (EETTLEQEK). The interval 127 to 219 (EETTLEQEKR…HEETTFEQEK (93 aa)) is 5 X approximate repeat A. The stretch at 136–147 (RVAGAGPDPIHH) is one CLE-1 repeat. Positions 136 to 231 (RVAGAGPDPI…APAGPDPIHH (96 aa)) are 5 X approximate repeat CLE. One copy of the A-2 repeat lies at 148 to 156 (QDTTLEQEK). One copy of the CLE-2 repeat lies at 157–168 (RAVPAGPDPKHH). The A-3 repeat unit spans residues 169-177 (EETTLEQEK). Residues 178–189 (RAVPAGPDPKHH) form a CLE-3 repeat. An A-4 repeat occupies 190–198 (EETTLEQEK). The CLE-4 repeat unit spans residues 199-210 (RAVPAGPDPKHH). Residues 211 to 219 (EETTFEQEK) form an A-5 repeat. The stretch at 220-231 (RGAPAGPDPIHH) is one CLE-5 repeat.

Belongs to the CLV3/ESR signal peptide family. In terms of tissue distribution, highly expressed exclusively within the dorsal esophageal gland cell during syncytium formation in host plants.

The protein localises to the secreted. Its subcellular location is the host cytoplasm. It is found in the host extracellular space. The protein resides in the extracellular space. It localises to the apoplast. Mimics host plant CLE extracellular signal peptides that regulate cell fate. May play a role in the differentiation or division of feeding cells (syncytia) induced in plant roots during infection. This Globodera rostochiensis (Golden nematode worm) protein is CLAVATA3/ESR (CLE)-related protein 4B-1 (CLE-4B-1).